The following is a 386-amino-acid chain: Demethylsterigmatocystin 6-O-methyltransferase (386 aa).

Phenylalanine 137–phenylalanine 150 lines the substrate pocket. Positions methionine 177–leucine 197 are substrate binding. S-adenosyl-L-methionine is bound by residues glycine 228 to glycine 229, aspartate 253, asparagine 273 to phenylalanine 274, and arginine 289. The active-site Proton acceptor is the histidine 293.

The protein belongs to the class I-like SAM-binding methyltransferase superfamily. Cation-independent O-methyltransferase family. COMT subfamily.

The enzyme catalyses 6-demethylsterigmatocystin + S-adenosyl-L-methionine = sterigmatocystin + S-adenosyl-L-homocysteine + H(+). The protein operates within mycotoxin biosynthesis; aflatoxin biosynthesis. Functionally, demethylsterigmatocystin 6-O-methyltransferase; part of the gene cluster that mediates the biosynthesis of aflatoxins, a group of polyketide-derived furanocoumarins, and part of the most toxic and carcinogenic compounds among the known mycotoxins. The four major aflatoxins produced by A.parasiticus are aflatoxin B1 (AFB1), aflatoxin B2 (AFB2), aflatoxin G1 (AFG1) and aflatoxin G2 (AFG2). Within the aflatoxin pathway, the methyltransferase aflO then catalyzes the modification of demethylsterigmatocystin (DMST) to sterigmatocystin (ST), and of dihydrodemethylsterigmatocystin (DMDHST) to dihydrosterigmatocystin (DHST). The biosynthesis of aflatoxins begins with the norsolorinic acid synthase aflC that combines a hexanoyl starter unit produced by the fatty acid synthase aflA/aflB and 7 malonyl-CoA extender units to synthesize the precursor NOR. The second step is the conversion of NOR to averantin and requires the norsolorinic acid ketoreductase aflD, which catalyzes the dehydration of norsolorinic acid to form (1'S)-averantin. The norsolorinic acid reductases aflE and aflF may also play a role in the conversion of NOR to AVN. The cytochrome P450 monooxygenase aflG then catalyzes the hydroxylation of AVN to 5'hydroxyaverantin (HAVN). The next step is performed by the 5'-hydroxyaverantin dehydrogenase aflH that transforms HAVN to 5'-oxoaverantin (OAVN) which is further converted to averufin (AVF) by aflK that plays a dual role in the pathway, as a 5'-oxoaverantin cyclase that mediates conversion of 5'-oxoaverantin, as well as a versicolorin B synthase in a later step in the pathway. The averufin oxidase aflI catalyzes the conversion of AVF to versiconal hemiacetal acetate (VHA). VHA is then the substrate for the versiconal hemiacetal acetate esterase aflJ to yield versiconal (VAL). Versicolorin B synthase aflK then converts VAL to versicolorin B (VERB) by closing the bisfuran ring of aflatoxin which is required for DNA-binding, thus giving to aflatoxin its activity as a mutagen. Then, the activity of the versicolorin B desaturase aflL leads to versicolorin A (VERA). A branch point starts from VERB since it can also be converted to dihydrodemethylsterigmatocystin (DMDHST), probably also by aflL, VERA being a precursor for aflatoxins B1 and G1, and DMDHST for aflatoxins B2 and G2. Next, the versicolorin reductase aflM and the cytochrome P450 monooxygenase aflN are involved in conversion of VERA to demethylsterigmatocystin (DMST). AflX and aflY seem also involved in this step, through probable aflX-mediated epoxide ring-opening step following versicolorin A oxidation and aflY-mediated Baeyer-Villiger oxidation required for the formation of the xanthone ring. The methyltransferase aflO then leads to the modification of DMST to sterigmatocystin (ST), and of DMDHST to dihydrosterigmatocystin (DHST). Both ST and DHST are then substrates of the O-methyltransferase aflP to yield O-methylsterigmatocystin (OMST) and dihydro-O-methylsterigmatocystin (DHOMST), respectively. Finally OMST is converted to aflatoxins B1 and G1, and DHOMST to aflatoxins B2 and G2, via the action of several enzymes including O-methylsterigmatocystin oxidoreductase aflQ, the cytochrome P450 monooxygenase aflU, but also the NADH-dependent flavin oxidoreductase nadA which is specifically required for the synthesis of AFG1. The chain is Demethylsterigmatocystin 6-O-methyltransferase from Aspergillus parasiticus (strain ATCC 56775 / NRRL 5862 / SRRC 143 / SU-1).